The chain runs to 116 residues: Acyl-CoA-binding protein homolog 3 (116 aa).

An ACB domain is found at 3–92; that stretch reads LQEKFDAAVE…LNDMFDKIAE (90 aa). An acyl-CoA contacts are provided by residues 34 to 38, Lys-60, and Tyr-79; that span reads YSLFK.

It belongs to the ACBP family.

In terms of biological role, binds medium- and long-chain acyl-CoA esters with very high affinity and may function as an intracellular carrier of acyl-CoA esters. The sequence is that of Acyl-CoA-binding protein homolog 3 (acbp-3) from Caenorhabditis elegans.